The following is a 192-amino-acid chain: Fibroblast growth factor 4B (192 aa).

The N-terminal stretch at 1-22 is a signal peptide; sequence MTVQLALVPILLLGTAAVMVHC.

It belongs to the heparin-binding growth factors family.

The protein localises to the secreted. Functionally, plays an important role in the regulation of embryonic development, cell proliferation, and cell differentiation. Good candidate for an inducing factor with possible roles both in mesoderm induction at the blastula stage and in the formation of the anteroposterior axis at the gastrula stage. This Xenopus laevis (African clawed frog) protein is Fibroblast growth factor 4B (fgf4-b).